A 380-amino-acid polypeptide reads, in one-letter code: D-alanine--D-alanine ligase (380 aa).

The ATP-grasp domain maps to 142 to 348 (KQVLTAHGIR…YADLIDRLIE (207 aa)). An ATP-binding site is contributed by 172 to 227 (QSRLGDNVFIKPANQGSSVGIHKASNVQEYLDGVADAFRYDYKVLVEQTIDGPQEV). The Mg(2+) site is built by D302, E315, and N317.

The protein belongs to the D-alanine--D-alanine ligase family. The cofactor is Mg(2+). It depends on Mn(2+) as a cofactor.

Its subcellular location is the cytoplasm. It catalyses the reaction 2 D-alanine + ATP = D-alanyl-D-alanine + ADP + phosphate + H(+). The protein operates within cell wall biogenesis; peptidoglycan biosynthesis. Its function is as follows. Cell wall formation. In Levilactobacillus brevis (strain ATCC 367 / BCRC 12310 / CIP 105137 / JCM 1170 / LMG 11437 / NCIMB 947 / NCTC 947) (Lactobacillus brevis), this protein is D-alanine--D-alanine ligase.